A 281-amino-acid chain; its full sequence is Cytochrome c oxidase subunit 3 (281 aa).

Over methionine 1–proline 15 the chain is Mitochondrial matrix. A helical transmembrane segment spans residues tryptophan 16–tryptophan 34. Residues phenylalanine 35–serine 40 lie on the Mitochondrial intermembrane side of the membrane. The helical transmembrane segment at threonine 41 to threonine 66 threads the bilayer. Residues phenylalanine 67–threonine 72 are Mitochondrial matrix-facing. A helical membrane pass occupies residues proline 73–serine 105. At leucine 106–glutamate 128 the chain is on the mitochondrial intermembrane side. A helical membrane pass occupies residues valine 129–methionine 152. At glutamate 153–asparagine 155 the chain is on the mitochondrial matrix side. The chain crosses the membrane as a helical span at residues arginine 156–glutamate 183. The Mitochondrial intermembrane portion of the chain corresponds to alanine 184–aspartate 190. Residues glycine 191 to leucine 223 form a helical membrane-spanning segment. At phenylalanine 224–histidine 232 the chain is on the mitochondrial matrix side. A helical membrane pass occupies residues phenylalanine 233–isoleucine 256. The Mitochondrial intermembrane segment spans residues tyrosine 257 to glutamine 281.

The protein belongs to the cytochrome c oxidase subunit 3 family. Component of the cytochrome c oxidase (complex IV, CIV), a multisubunit enzyme composed of 14 subunits. The complex is composed of a catalytic core of 3 subunits MT-CO1, MT-CO2 and MT-CO3, encoded in the mitochondrial DNA, and 11 supernumerary subunits COX4I, COX5A, COX5B, COX6A, COX6B, COX6C, COX7A, COX7B, COX7C, COX8 and NDUFA4, which are encoded in the nuclear genome. The complex exists as a monomer or a dimer and forms supercomplexes (SCs) in the inner mitochondrial membrane with NADH-ubiquinone oxidoreductase (complex I, CI) and ubiquinol-cytochrome c oxidoreductase (cytochrome b-c1 complex, complex III, CIII), resulting in different assemblies (supercomplex SCI(1)III(2)IV(1) and megacomplex MCI(2)III(2)IV(2)).

The protein resides in the mitochondrion inner membrane. The enzyme catalyses 4 Fe(II)-[cytochrome c] + O2 + 8 H(+)(in) = 4 Fe(III)-[cytochrome c] + 2 H2O + 4 H(+)(out). Component of the cytochrome c oxidase, the last enzyme in the mitochondrial electron transport chain which drives oxidative phosphorylation. The respiratory chain contains 3 multisubunit complexes succinate dehydrogenase (complex II, CII), ubiquinol-cytochrome c oxidoreductase (cytochrome b-c1 complex, complex III, CIII) and cytochrome c oxidase (complex IV, CIV), that cooperate to transfer electrons derived from NADH and succinate to molecular oxygen, creating an electrochemical gradient over the inner membrane that drives transmembrane transport and the ATP synthase. Cytochrome c oxidase is the component of the respiratory chain that catalyzes the reduction of oxygen to water. Electrons originating from reduced cytochrome c in the intermembrane space (IMS) are transferred via the dinuclear copper A center (CU(A)) of subunit 2 and heme A of subunit 1 to the active site in subunit 1, a binuclear center (BNC) formed by heme A3 and copper B (CU(B)). The BNC reduces molecular oxygen to 2 water molecules using 4 electrons from cytochrome c in the IMS and 4 protons from the mitochondrial matrix. This chain is Cytochrome c oxidase subunit 3 (MT-CO3), found in Didelphis virginiana (North American opossum).